A 187-amino-acid polypeptide reads, in one-letter code: Elongation factor P (187 aa).

Belongs to the elongation factor P family.

It localises to the cytoplasm. It participates in protein biosynthesis; polypeptide chain elongation. Its function is as follows. Involved in peptide bond synthesis. Stimulates efficient translation and peptide-bond synthesis on native or reconstituted 70S ribosomes in vitro. Probably functions indirectly by altering the affinity of the ribosome for aminoacyl-tRNA, thus increasing their reactivity as acceptors for peptidyl transferase. The chain is Elongation factor P from Treponema denticola (strain ATCC 35405 / DSM 14222 / CIP 103919 / JCM 8153 / KCTC 15104).